The primary structure comprises 168 residues: Photosystem I assembly protein Ycf3 (168 aa).

TPR repeat units lie at residues 35–68 (AFTYYRDRMSAQSEGNYAEALQNYYEAMRLEIDP), 72–105 (SYILYNIGLIHTSNGEHMKALEYYFRALERNPFL), and 120–153 (GEQAIQQGDSEIAGAWFDQAAEYWKQALALTPGN).

It belongs to the Ycf3 family.

It localises to the plastid membrane. Functionally, essential for the assembly of the photosystem I (PSI) complex. May act as a chaperone-like factor to guide the assembly of the PSI subunits. This Cuscuta reflexa (Southern Asian dodder) protein is Photosystem I assembly protein Ycf3.